The primary structure comprises 224 residues: Non-structural protein 3 (224 aa).

The 91-residue stretch at 34 to 124 (NVVPIRQASN…RYKNALFIIF (91 aa)) folds into the CoV 3a-like viroporin TM domain. 3 consecutive transmembrane segments (helical) span residues 40–60 (QASNVTGFLFTSVFVYFFALF), 69–88 (YIMLAARFAVVFLYCPLLYY), and 95–111 (ATIICCALIGRLCLVCF). In terms of domain architecture, CoV 3a-like viroporin CD spans 128–203 (TLSFLNGKAA…KLYVFSQHQI (76 aa)).

It is found in the host membrane. This is Non-structural protein 3 from Sus scrofa (Pig).